A 635-amino-acid chain; its full sequence is 1-deoxy-D-xylulose-5-phosphate synthase (635 aa).

Residues histidine 78 and glycine 119–alanine 121 contribute to the thiamine diphosphate site. Aspartate 151 provides a ligand contact to Mg(2+). Thiamine diphosphate is bound by residues glycine 152–alanine 153, asparagine 180, and tyrosine 291. A Mg(2+)-binding site is contributed by asparagine 180. The interval proline 305–tyrosine 325 is disordered. Glutamate 374 provides a ligand contact to thiamine diphosphate.

The protein belongs to the transketolase family. DXPS subfamily. In terms of assembly, homodimer. The cofactor is Mg(2+). Thiamine diphosphate serves as cofactor.

It carries out the reaction D-glyceraldehyde 3-phosphate + pyruvate + H(+) = 1-deoxy-D-xylulose 5-phosphate + CO2. Its pathway is metabolic intermediate biosynthesis; 1-deoxy-D-xylulose 5-phosphate biosynthesis; 1-deoxy-D-xylulose 5-phosphate from D-glyceraldehyde 3-phosphate and pyruvate: step 1/1. Its function is as follows. Catalyzes the acyloin condensation reaction between C atoms 2 and 3 of pyruvate and glyceraldehyde 3-phosphate to yield 1-deoxy-D-xylulose-5-phosphate (DXP). This Rhodopirellula baltica (strain DSM 10527 / NCIMB 13988 / SH1) protein is 1-deoxy-D-xylulose-5-phosphate synthase.